The chain runs to 112 residues: uncharacterized protein (112 aa).

Asn29 and Asn60 each carry an N-linked (GlcNAc...) asparagine; by host glycan. Residues 66-86 (IFNGLGFILIVIFIYLLLITL) form a helical membrane-spanning segment.

Belongs to the asfivirus B117L family.

The protein localises to the host membrane. It is found in the virion. This is an uncharacterized protein from African swine fever virus (isolate Tick/South Africa/Pretoriuskop Pr4/1996) (ASFV).